We begin with the raw amino-acid sequence, 305 residues long: Heterogeneous nuclear ribonucleoprotein A0 (305 aa).

Methionine 1 carries the N-acetylmethionine modification. In terms of domain architecture, RRM 1 spans 7-86; that stretch reads CKLFIGGLNV…VELKRAVSRE (80 aa). Residue serine 68 is modified to Phosphoserine. Lysine 80 is covalently cross-linked (Glycyl lysine isopeptide (Lys-Gly) (interchain with G-Cter in SUMO2)). Phosphoserine; by MAPKAPK2 is present on serine 84. Residues lysine 96, lysine 98, lysine 99, and lysine 106 each participate in a glycyl lysine isopeptide (Lys-Gly) (interchain with G-Cter in SUMO2) cross-link. An RRM 2 domain is found at 98–175; sequence KKLFVGGLKG…HRVEVKKAVP (78 aa). Lysine 133 carries the N6-acetyllysine modification. Omega-N-methylarginine is present on arginine 139. Residues lysine 154, lysine 159, lysine 172, and lysine 176 each participate in a glycyl lysine isopeptide (Lys-Gly) (interchain with G-Cter in SUMO2) cross-link. Disordered stretches follow at residues 178 to 211 and 265 to 305; these read DIHA…RDQN and QSSY…GGSF. Gly residues-rich tracts occupy residues 181–211 and 272–284; these read AGGG…RDQN and KSGG…GSWG. The residue at position 286 (arginine 286) is an Omega-N-methylarginine. Residues 292 to 305 show a composition bias toward gly residues; that stretch reads YRGGYGGGYGGGSF. Arginine 293 carries the post-translational modification Asymmetric dimethylarginine; alternate. Position 293 is a dimethylated arginine; alternate (arginine 293). Residue arginine 293 is modified to Omega-N-methylarginine; alternate.

In terms of processing, phosphorylated at Ser-84 by MAPKAPK2 in response to LPS treatment, promoting stabilization of GADD45A mRNA. Post-translationally, arg-293 is dimethylated, probably to asymmetric dimethylarginine.

It localises to the nucleus. Functionally, mRNA-binding component of ribonucleosomes. Specifically binds AU-rich element (ARE)-containing mRNAs. Involved in post-transcriptional regulation of cytokines mRNAs. The sequence is that of Heterogeneous nuclear ribonucleoprotein A0 (Hnrnpa0) from Mus musculus (Mouse).